We begin with the raw amino-acid sequence, 406 residues long: MDLFPVLKELAQKTPSKILLIVLDGVGGLPLEPGGPTELEAAKTPNLDRLAEESALGLLTPVYPGLAPGSGPGHLALFGYDPFRYVVGRGALSALGLGADFREGDVALRGNFATLDPEGKVVDRRAGRPPTEENQRVIAKLKEAIPRIEDVEVLFYTESEHRFLVILRGEGLEDKVTDTDPQKTGLPPLKAKALDEASERTARLVNLLSERIREVLKDEPRMNGALFRGASKKPSFPRMQEVYKLTPAAIASYPMYKGLASLVGMEVLPVEGEGDALEGKLKALKENWGRYDFFYFHVKKTDAMGEDGNFHGKVEKVELFDALLPEILALGPDVLAITGDHSTPALLKAHSWHPVPLLLKAPYLRADEARRFTEREAQRGSLGHLRGVELMPLLLAHAGKLLKYGA.

It belongs to the BPG-independent phosphoglycerate mutase family. A-PGAM subfamily.

The catalysed reaction is (2R)-2-phosphoglycerate = (2R)-3-phosphoglycerate. Its pathway is carbohydrate degradation; glycolysis; pyruvate from D-glyceraldehyde 3-phosphate: step 3/5. Its function is as follows. Catalyzes the interconversion of 2-phosphoglycerate and 3-phosphoglycerate. This is Probable 2,3-bisphosphoglycerate-independent phosphoglycerate mutase from Thermus thermophilus (strain ATCC 27634 / DSM 579 / HB8).